The chain runs to 295 residues: Caffeine dehydrogenase subunit beta (295 aa).

The FAD-binding PCMH-type domain maps to 1 to 178 (MKPTAFDYIR…CEIRIPVPSQ (178 aa)). Residues 32–36 (AGGQS) and 111–115 (TLGGN) contribute to the FAD site.

Heterotrimer composed of an alpha (CdhA), a beta (CdhB) and a gamma (CdhC) subunit.

It carries out the reaction caffeine + a ubiquinone + H2O = 1,3,7-trimethylurate + a ubiquinol. It catalyses the reaction ubiquinone-0 + caffeine + H2O = ubiquinol-0 + 1,3,7-trimethylurate. The enzyme catalyses theobromine + a ubiquinone + H2O = 3,7-dimethylurate + a ubiquinol. In terms of biological role, component of the caffeine dehydrogenase complex that catalyzes the hydrolytical oxidation of 1,3,7-trimethylxanthine (caffeine) by incorporation of an oxygen atom originating from a water molecule into position C-8 to produce 1,3,7-trimethyluric acid (TMU). Coenzyme Q0 (ubiquinone-0) is the preferred electron acceptor and, to a lesser extent, coenzyme Q2 (ubiquinone-2) can also be used, but oxygen and NAD(P)(+) cannot. Is involved in a caffeine degradation pathway that allows Pseudomonas sp. strain CBB1 to grow on caffeine as the sole carbon and nitrogen source. Is also active with theobromine as substrate, but shows a very poor activity with theophylline and is not active with xanthine, 3-methylxanthine, 7-methylxanthine, TMU, and 3,7-dimethylurate. The protein is Caffeine dehydrogenase subunit beta of Pseudomonas sp. (strain CBB1).